Here is a 121-residue protein sequence, read N- to C-terminus: Large ribosomal subunit protein bL19 (121 aa).

The protein belongs to the bacterial ribosomal protein bL19 family.

This protein is located at the 30S-50S ribosomal subunit interface and may play a role in the structure and function of the aminoacyl-tRNA binding site. This is Large ribosomal subunit protein bL19 from Chlamydia caviae (strain ATCC VR-813 / DSM 19441 / 03DC25 / GPIC) (Chlamydophila caviae).